The following is a 380-amino-acid chain: Apolipoprotein A-IV (380 aa).

The first 20 residues, 1–20 (MFLKAVVLSLALVAVTGAEA), serve as a signal peptide directing secretion. A run of 13 repeats spans residues 33–54 (DYFS…KSEL), 60–81 (TLFQ…KKLV), 82–103 (PFAT…EEIR), 115–136 (PHAT…QRLG), 137–158 (PYAE…RQLT), 159–180 (PYVE…ASLA), 181–202 (PYAE…GRLT), 203–224 (PYAD…RSLA), 225–246 (PYAQ…FQMK), 247–268 (KHAE…QGLV), 269–286 (PLVN…EDLQ), 287–308 (KSLA…RTVG), and 309–330 (PYGE…QKLG). Positions 33–330 (DYFSQLGNNA…QLDTLRQKLG (298 aa)) are 13 X 22 AA approximate tandem repeats. Residues 361 to 380 (KESQAPALPAQEEMPVPLGG) form a disordered region.

It belongs to the apolipoprotein A1/A4/E family. In terms of assembly, homodimer. Secreted in plasma.

It localises to the secreted. May have a role in chylomicrons and VLDL secretion and catabolism. Required for efficient activation of lipoprotein lipase by ApoC-II; potent activator of LCAT. Apoa-IV is a major component of HDL and chylomicrons. This Bos taurus (Bovine) protein is Apolipoprotein A-IV (APOA4).